The chain runs to 1152 residues: Nucleolar protein 6 (1152 aa).

Disordered regions lie at residues 1-30 (MPSAGERPAVKMGPAPAGEQHRRATEDPEV) and 36-55 (EGMDKEKAPSRKRARTEPPA). S65 bears the Phosphoserine mark. The stretch at 92-128 (LLRLQVEELLKEVRLSEKKKERIDNFLKEVTKRIQKV) forms a coiled coil. 2 positions are modified to phosphoserine: S292 and S817.

The protein belongs to the NRAP family. In terms of assembly, part of the small subunit (SSU) processome, composed of more than 70 proteins and the RNA chaperone small nucleolar RNA (snoRNA) U3. Interacts with RRP7A; required for NOL6 localization to nucleolus. As to expression, ubiquitously expressed.

Its subcellular location is the nucleus. The protein resides in the nucleolus. The protein localises to the chromosome. Functionally, part of the small subunit (SSU) processome, first precursor of the small eukaryotic ribosomal subunit. During the assembly of the SSU processome in the nucleolus, many ribosome biogenesis factors, an RNA chaperone and ribosomal proteins associate with the nascent pre-rRNA and work in concert to generate RNA folding, modifications, rearrangements and cleavage as well as targeted degradation of pre-ribosomal RNA by the RNA exosome. This Mus musculus (Mouse) protein is Nucleolar protein 6 (Nol6).